We begin with the raw amino-acid sequence, 488 residues long: Glutamyl-tRNA(Gln) amidotransferase subunit A (488 aa).

Residues K77 and S152 each act as charge relay system in the active site. S176 (acyl-ester intermediate) is an active-site residue.

The protein belongs to the amidase family. GatA subfamily. Heterotrimer of A, B and C subunits.

The enzyme catalyses L-glutamyl-tRNA(Gln) + L-glutamine + ATP + H2O = L-glutaminyl-tRNA(Gln) + L-glutamate + ADP + phosphate + H(+). Functionally, allows the formation of correctly charged Gln-tRNA(Gln) through the transamidation of misacylated Glu-tRNA(Gln) in organisms which lack glutaminyl-tRNA synthetase. The reaction takes place in the presence of glutamine and ATP through an activated gamma-phospho-Glu-tRNA(Gln). This Streptococcus uberis (strain ATCC BAA-854 / 0140J) protein is Glutamyl-tRNA(Gln) amidotransferase subunit A.